The primary structure comprises 492 residues: Probable cytochrome P450 310a1 (492 aa).

Residue Cys428 coordinates heme.

It belongs to the cytochrome P450 family. Heme serves as cofactor.

It localises to the endoplasmic reticulum membrane. The protein localises to the microsome membrane. Its function is as follows. May be involved in the metabolism of insect hormones and in the breakdown of synthetic insecticides. This Drosophila melanogaster (Fruit fly) protein is Probable cytochrome P450 310a1 (Cyp310a1).